We begin with the raw amino-acid sequence, 358 residues long: UPF0324 membrane protein CT0845 (358 aa).

The next 10 membrane-spanning stretches (helical) occupy residues 36–53 (YFPG…ATFL), 57–76 (YGAP…RFLS), 83–105 (LVGI…GMRI), 115–134 (VKPV…FGLA), 146–168 (GVLT…AAVL), 178–200 (TIFT…PVVA), 244–261 (LLRV…SLIF), 276–295 (LLPP…SLGV), 307–325 (VSRW…KTSL), and 335–357 (PVSI…VVWM).

The protein belongs to the UPF0324 family.

It is found in the cell membrane. This chain is UPF0324 membrane protein CT0845, found in Chlorobaculum tepidum (strain ATCC 49652 / DSM 12025 / NBRC 103806 / TLS) (Chlorobium tepidum).